Consider the following 91-residue polypeptide: Small ribosomal subunit protein uS19 (91 aa).

This sequence belongs to the universal ribosomal protein uS19 family.

Its function is as follows. Protein S19 forms a complex with S13 that binds strongly to the 16S ribosomal RNA. This Metamycoplasma hominis (strain ATCC 23114 / DSM 25592 / NBRC 14850 / NCTC 10111 / PG21) (Mycoplasma hominis) protein is Small ribosomal subunit protein uS19.